The primary structure comprises 130 residues: Large-conductance mechanosensitive channel (130 aa).

The next 2 membrane-spanning stretches (helical) occupy residues 14–34 (IIDLAVAVVIGGAFGAIVTSF) and 73–93 (FVDFIIIAFSIFLAIKFLVKF).

Belongs to the MscL family. In terms of assembly, homopentamer.

The protein localises to the cell membrane. Its function is as follows. Channel that opens in response to stretch forces in the membrane lipid bilayer. May participate in the regulation of osmotic pressure changes within the cell. This Oceanobacillus iheyensis (strain DSM 14371 / CIP 107618 / JCM 11309 / KCTC 3954 / HTE831) protein is Large-conductance mechanosensitive channel.